The following is a 227-amino-acid chain: Inner membrane lipoprotein SadB (227 aa).

The signal sequence occupies residues 1 to 21; that stretch reads MHKNGKFIPLLALGFTFFLSG. Residue C22 is the site of N-palmitoyl cysteine attachment. C22 carries the S-diacylglycerol cysteine lipid modification. Positions 31–68 form a coiled coil; the sequence is VEEMKEQQKEQETKINLLEKQQKEQEAKINLLEKQQAT.

In terms of assembly, homotrimer.

It localises to the cell inner membrane. In terms of biological role, required for proper surface expression of the autotransporter adhesin SadA. Could be directly involved in the biogenesis of functionally active SadA. The sequence is that of Inner membrane lipoprotein SadB from Salmonella typhimurium (strain LT2 / SGSC1412 / ATCC 700720).